Reading from the N-terminus, the 116-residue chain is Ribonuclease P protein component (116 aa).

The protein belongs to the RnpA family. As to quaternary structure, consists of a catalytic RNA component (M1 or rnpB) and a protein subunit.

It catalyses the reaction Endonucleolytic cleavage of RNA, removing 5'-extranucleotides from tRNA precursor.. In terms of biological role, RNaseP catalyzes the removal of the 5'-leader sequence from pre-tRNA to produce the mature 5'-terminus. It can also cleave other RNA substrates such as 4.5S RNA. The protein component plays an auxiliary but essential role in vivo by binding to the 5'-leader sequence and broadening the substrate specificity of the ribozyme. The protein is Ribonuclease P protein component of Gluconacetobacter diazotrophicus (strain ATCC 49037 / DSM 5601 / CCUG 37298 / CIP 103539 / LMG 7603 / PAl5).